The sequence spans 231 residues: Putative Nudix hydrolase FPV054 (231 aa).

The Nudix hydrolase domain maps to 74–217 (SKRRSFSEIL…SNEKYEYLHF (144 aa)). The Nudix box motif lies at 125–146 (GRVKNKESIYQCLSRELSEESD). Glutamate 131 is a binding site for Mg(2+). Glutamate 140 acts as the Nucleophile in catalysis. 2 residues coordinate Mg(2+): glutamate 144 and aspartate 165.

Belongs to the Nudix hydrolase family. Mg(2+) is required as a cofactor. Mn(2+) serves as cofactor.

Functionally, decapping enzyme required for the removal of the 5'-end m7GpppN cap tethered to viral and host mRNAs to allow their decay in cells. May therefore accelerate viral and cellular mRNA turnover to eliminate competing host mRNAs and allow stage-specific synthesis of viral proteins. Acceleration of the turnover of cellular transcripts may even promote the shutoff of host protein synthesis. Does not cleave unmethylated RNAs or RNAs shorter than 24 nucleotides. This chain is Putative Nudix hydrolase FPV054, found in Vertebrata (FPV).